A 415-amino-acid chain; its full sequence is Adipocyte plasma membrane-associated protein (415 aa).

The tract at residues 1-30 is disordered; the sequence is MNEAEGLRQRRPLRPQVITEDSPAQEAKEG. At 1-39 the chain is on the cytoplasmic side; sequence MNEAEGLRQRRPLRPQVITEDSPAQEAKEGSAYSSKVFR. Residues 40–60 form a helical membrane-spanning segment; it reads VTFLTLAASLAVPLLGATVLL. The Extracellular portion of the chain corresponds to 61 to 412; sequence DCPIDPQPIS…RSPFICRLNL (352 aa). A glycan (N-linked (GlcNAc...) asparagine) is linked at N159.

This sequence belongs to the strictosidine synthase family.

Its subcellular location is the membrane. The sequence is that of Adipocyte plasma membrane-associated protein (APMAP) from Gallus gallus (Chicken).